A 294-amino-acid polypeptide reads, in one-letter code: Ribosomal protein L11 methyltransferase (294 aa).

S-adenosyl-L-methionine is bound by residues Thr-145, Gly-166, Asp-188, and Asn-230.

It belongs to the methyltransferase superfamily. PrmA family.

Its subcellular location is the cytoplasm. It catalyses the reaction L-lysyl-[protein] + 3 S-adenosyl-L-methionine = N(6),N(6),N(6)-trimethyl-L-lysyl-[protein] + 3 S-adenosyl-L-homocysteine + 3 H(+). In terms of biological role, methylates ribosomal protein L11. This is Ribosomal protein L11 methyltransferase from Glaesserella parasuis serovar 5 (strain SH0165) (Haemophilus parasuis).